The following is a 172-amino-acid chain: Centrin-2 (172 aa).

The segment at 1-30 (MASNFKKANMASSSQRKRMSPKPELTEEQK) is disordered. Residue A2 is modified to N-acetylalanine. The required for self-assembly stretch occupies residues 2–25 (ASNFKKANMASSSQRKRMSPKPEL). S20 is subject to Phosphoserine. A Glycyl lysine isopeptide (Lys-Gly) (interchain with G-Cter in SUMO2) cross-link involves residue K22. T26 bears the Phosphothreonine mark. EF-hand domains lie at 28–63 (EQKQ…LGFE), 64–99 (PKKE…KMSE), 101–136 (DTKE…LGEN), and 137–172 (LTDE…TSLY). Ca(2+) is bound by residues D41, D43, T45, T47, and E52. Ca(2+) contacts are provided by D150, D152, D154, E156, and E161.

This sequence belongs to the centrin family. Monomer. Homooligomer. Interacts with SFI1. Interacts with CCP110. Component of the XPC complex composed of XPC, RAD23B and CETN2. Component of the nuclear pore complex (NPC)-associated TREX-2 complex (transcription and export complex 2), composed of at least GANP, 2 copies of ENY2, PCID2, SEM1/DSS1, and either centrin CETN2 or centrin CETN3. The TREX-2 complex also associates with ALYREF/ALY and with the nucleoporin NUP153. Interacts with USP49. Forms a microtubule-associated complex with POC5, POC1B and FAM161A. Interacts with CCDC15.

Its subcellular location is the cytoplasm. It localises to the cytoskeleton. It is found in the microtubule organizing center. The protein localises to the centrosome. The protein resides in the centriole. Its subcellular location is the nucleus envelope. It localises to the nucleus. It is found in the nuclear pore complex. Functionally, plays a fundamental role in microtubule organizing center structure and function. Required for centriole duplication and correct spindle formation. Has a role in regulating cytokinesis and genome stability via cooperation with CALM1 and CCP110. Involved in global genome nucleotide excision repair (GG-NER) by acting as component of the XPC complex. Cooperatively with RAD23B appears to stabilize XPC. In vitro, stimulates DNA binding of the XPC:RAD23B dimer. In terms of biological role, the XPC complex is proposed to represent the first factor bound at the sites of DNA damage and together with other core recognition factors, XPA, RPA and the TFIIH complex, is part of the pre-incision (or initial recognition) complex. The XPC complex recognizes a wide spectrum of damaged DNA characterized by distortions of the DNA helix such as single-stranded loops, mismatched bubbles or single-stranded overhangs. The orientation of XPC complex binding appears to be crucial for inducing a productive NER. XPC complex is proposed to recognize and to interact with unpaired bases on the undamaged DNA strand which is followed by recruitment of the TFIIH complex and subsequent scanning for lesions in the opposite strand in a 5'-to-3' direction by the NER machinery. Cyclobutane pyrimidine dimers (CPDs) which are formed upon UV-induced DNA damage esacpe detection by the XPC complex due to a low degree of structural perurbation. Instead they are detected by the UV-DDB complex which in turn recruits and cooperates with the XPC complex in the respective DNA repair. Its function is as follows. As a component of the TREX-2 complex, involved in the export of mRNAs to the cytoplasm through the nuclear pores. The protein is Centrin-2 (CETN2) of Homo sapiens (Human).